Consider the following 240-residue polypeptide: UDP-2,3-diacylglucosamine hydrolase (240 aa).

Positions 8, 10, 41, 79, and 114 each coordinate Mn(2+). Residue 79-80 (NR) participates in substrate binding. Substrate is bound by residues Asp122, Ser160, Asn164, Lys167, and His195. Residues His195 and His197 each coordinate Mn(2+).

It belongs to the LpxH family. Requires Mn(2+) as cofactor.

Its subcellular location is the cell inner membrane. The catalysed reaction is UDP-2-N,3-O-bis[(3R)-3-hydroxytetradecanoyl]-alpha-D-glucosamine + H2O = 2-N,3-O-bis[(3R)-3-hydroxytetradecanoyl]-alpha-D-glucosaminyl 1-phosphate + UMP + 2 H(+). The protein operates within glycolipid biosynthesis; lipid IV(A) biosynthesis; lipid IV(A) from (3R)-3-hydroxytetradecanoyl-[acyl-carrier-protein] and UDP-N-acetyl-alpha-D-glucosamine: step 4/6. Its function is as follows. Hydrolyzes the pyrophosphate bond of UDP-2,3-diacylglucosamine to yield 2,3-diacylglucosamine 1-phosphate (lipid X) and UMP by catalyzing the attack of water at the alpha-P atom. Involved in the biosynthesis of lipid A, a phosphorylated glycolipid that anchors the lipopolysaccharide to the outer membrane of the cell. This is UDP-2,3-diacylglucosamine hydrolase from Escherichia coli (strain UTI89 / UPEC).